The following is a 38-amino-acid chain: Cytochrome b6-f complex subunit 5 (38 aa).

The helical transmembrane segment at 5–25 (LLLGIVLGLIPVTLAGLFVAA) threads the bilayer.

It belongs to the PetG family. The 4 large subunits of the cytochrome b6-f complex are cytochrome b6, subunit IV (17 kDa polypeptide, PetD), cytochrome f and the Rieske protein, while the 4 small subunits are PetG, PetL, PetM and PetN. The complex functions as a dimer.

The protein resides in the cellular thylakoid membrane. Its function is as follows. Component of the cytochrome b6-f complex, which mediates electron transfer between photosystem II (PSII) and photosystem I (PSI), cyclic electron flow around PSI, and state transitions. PetG is required for either the stability or assembly of the cytochrome b6-f complex. The chain is Cytochrome b6-f complex subunit 5 from Picosynechococcus sp. (strain ATCC 27264 / PCC 7002 / PR-6) (Agmenellum quadruplicatum).